We begin with the raw amino-acid sequence, 869 residues long: Protein translocase subunit SecA (869 aa).

Residues Q85, 103–107, and D508 each bind ATP; that span reads GEGKT.

Belongs to the SecA family. Monomer and homodimer. Part of the essential Sec protein translocation apparatus which comprises SecA, SecYEG and auxiliary proteins SecDF. Other proteins may also be involved.

It localises to the cell membrane. The protein resides in the cytoplasm. The catalysed reaction is ATP + H2O + cellular proteinSide 1 = ADP + phosphate + cellular proteinSide 2.. In terms of biological role, part of the Sec protein translocase complex. Interacts with the SecYEG preprotein conducting channel. Has a central role in coupling the hydrolysis of ATP to the transfer of proteins into and across the cell membrane, serving as an ATP-driven molecular motor driving the stepwise translocation of polypeptide chains across the membrane. This is Protein translocase subunit SecA from Deinococcus geothermalis (strain DSM 11300 / CIP 105573 / AG-3a).